A 302-amino-acid chain; its full sequence is 4-hydroxy-tetrahydrodipicolinate synthase (302 aa).

Pyruvate is bound at residue Thr49. Tyr137 functions as the Proton donor/acceptor in the catalytic mechanism. Lys166 serves as the catalytic Schiff-base intermediate with substrate. Ile208 provides a ligand contact to pyruvate.

This sequence belongs to the DapA family. As to quaternary structure, homotetramer; dimer of dimers.

The protein resides in the cytoplasm. The catalysed reaction is L-aspartate 4-semialdehyde + pyruvate = (2S,4S)-4-hydroxy-2,3,4,5-tetrahydrodipicolinate + H2O + H(+). The protein operates within amino-acid biosynthesis; L-lysine biosynthesis via DAP pathway; (S)-tetrahydrodipicolinate from L-aspartate: step 3/4. Its function is as follows. Catalyzes the condensation of (S)-aspartate-beta-semialdehyde [(S)-ASA] and pyruvate to 4-hydroxy-tetrahydrodipicolinate (HTPA). This chain is 4-hydroxy-tetrahydrodipicolinate synthase, found in Chloroherpeton thalassium (strain ATCC 35110 / GB-78).